The sequence spans 392 residues: Glucan endo-1,3-beta-glucosidase 14 (392 aa).

A signal peptide spans 1 to 21 (MATHSLSFFFRVLLLLFLTLS). 2 N-linked (GlcNAc...) asparagine glycosylation sites follow: Asn-54 and Asn-89. Glu-122 (proton donor) is an active-site residue. The Nucleophile role is filled by Glu-267. Residue Ser-359 is the site of GPI-anchor amidated serine attachment. A propeptide spans 360–392 (RATTIKILNLWRVVMGLAVAWFILDMGDKMRMR) (removed in mature form).

It belongs to the glycosyl hydrolase 17 family.

It is found in the cell membrane. The protein resides in the secreted. It localises to the cell wall. The protein localises to the cytoplasm. It carries out the reaction Hydrolysis of (1-&gt;3)-beta-D-glucosidic linkages in (1-&gt;3)-beta-D-glucans.. In Arabidopsis thaliana (Mouse-ear cress), this protein is Glucan endo-1,3-beta-glucosidase 14.